The sequence spans 417 residues: Adrenocortical dysplasia protein homolog (417 aa).

Positions 11–13 match the PWI motif; sequence PWI. Ser25 carries the post-translational modification Phosphoserine. The interval 156–245 is interaction with POT1; that stretch reads ESASSSAGLT…SSIDSSQKAQ (90 aa). Composition is skewed to polar residues over residues 237–250 and 259–292; these read SIDSSQKAQENPAS and SGASVSLLSALPTSDPGQKDNSQPPPTVCSTSPR. The disordered stretch occupies residues 237–309; sequence SIDSSQKAQE…PCSSTPSSPL (73 aa). A compositionally biased stretch (low complexity) spans 296-309; it reads PSSTPCSSTPSSPL. Ser313 and Ser317 each carry phosphoserine. Lys348 is covalently cross-linked (Glycyl lysine isopeptide (Lys-Gly) (interchain with G-Cter in SUMO2)).

Component of the shelterin complex (telosome) composed of TERF1, TERF2, TINF2, TERF2IP ACD and POT1. Forms heterodimers with POT1. Identified in a complex with POT1 and single-stranded telomeric DNA. Interacts with STN1 and TINF2.

Its subcellular location is the nucleus. It is found in the chromosome. The protein localises to the telomere. In terms of biological role, component of the shelterin complex (telosome) that is involved in the regulation of telomere length and protection. Shelterin associates with arrays of double-stranded TTAGGG repeats added by telomerase and protects chromosome ends. Without its protective activity, telomeres are no longer hidden from the DNA damage surveillance and chromosome ends are inappropriately processed by DNA repair pathways. Promotes binding of POT1 to single-stranded telomeric DNA. Modulates the inhibitory effects of POT1 on telomere elongation. The ACD-POT1 heterodimer enhances telomere elongation by recruiting telomerase to telomeres and increasing its processivity. May play a role in organogenesis. This chain is Adrenocortical dysplasia protein homolog, found in Rattus norvegicus (Rat).